The following is a 155-amino-acid chain: Ribosome maturation factor RimP (155 aa).

The protein belongs to the RimP family.

It localises to the cytoplasm. Required for maturation of 30S ribosomal subunits. This Bacteroides fragilis (strain ATCC 25285 / DSM 2151 / CCUG 4856 / JCM 11019 / LMG 10263 / NCTC 9343 / Onslow / VPI 2553 / EN-2) protein is Ribosome maturation factor RimP.